Here is a 301-residue protein sequence, read N- to C-terminus: NAD kinase (301 aa).

Aspartate 84 serves as the catalytic Proton acceptor. Residues aspartate 84–glycine 85, arginine 89, asparagine 158–glutamate 159, lysine 169, asparagine 188, threonine 199–serine 204, and glutamine 258 each bind NAD(+).

Belongs to the NAD kinase family. Requires a divalent metal cation as cofactor.

It localises to the cytoplasm. The catalysed reaction is NAD(+) + ATP = ADP + NADP(+) + H(+). In terms of biological role, involved in the regulation of the intracellular balance of NAD and NADP, and is a key enzyme in the biosynthesis of NADP. Catalyzes specifically the phosphorylation on 2'-hydroxyl of the adenosine moiety of NAD to yield NADP. In Tropheryma whipplei (strain Twist) (Whipple's bacillus), this protein is NAD kinase.